A 172-amino-acid chain; its full sequence is MESRFKLKEEYHQSCCAIQVRVPVIKTSSTKRKTELYTTGPFIMRSSSPSQPPSIKAQHRIAKHKAIRRRRIDLNCGCSIFYHIKCADHGFTHRGEHHCASGREFRFYLGGTKSPLFQDHAGGRSSIHTDKDIPHPSQVQSQPQESTGSPQSIPELPSLDDIDSSFWDDIFK.

Positions 56-71 match the Nuclear localization signal motif; sequence KAQHRIAKHKAIRRRR. Residues 76 to 93 fold into a zinc finger; the sequence is CGCSIFYHIKCADHGFTH. A disordered region spans residues 119–172; it reads DHAGGRSSIHTDKDIPHPSQVQSQPQESTGSPQSIPELPSLDDIDSSFWDDIFK. The segment covering 137-152 has biased composition (polar residues); that stretch reads SQVQSQPQESTGSPQS. The tract at residues 158–172 is transactivation; it reads SLDDIDSSFWDDIFK.

Belongs to the geminiviridae transcriptional activator protein family. In terms of assembly, monomer. Homodimer. Homooligomer. Self-interaction correlates with nuclear localization and efficient activation of transcription. Monomers suppress local silencing by interacting with and inactivating host adenosine kinase 2 (ADK2) in the cytoplasm. Interacts with and inhibits host SNF1 kinase. Binds to ssDNA. Post-translationally, phosphorylated.

It is found in the host nucleus. It localises to the host cytoplasm. Functionally, strong activator of the late viral genes promoters. Enhances the expression of the capsid protein and nuclear shuttle protein. Acts as a suppressor of RNA-mediated gene silencing, also known as post-transcriptional gene silencing (PTGS), a mechanism of plant viral defense that limits the accumulation of viral RNAs. Suppresses the host RNA silencing by inhibiting adenosine kinase 2 (ADK2), a kinase involved in a general methylation pathway. Also suppresses the host basal defense by interacting with and inhibiting SNF1 kinase, a key regulator of cell metabolism implicated in innate antiviral defense. Determines pathogenicity. The polypeptide is Transcriptional activator protein (Bean golden yellow mosaic virus (isolate Puerto Rico-Japan) (BGYMV)).